Here is a 208-residue protein sequence, read N- to C-terminus: Large ribosomal subunit protein uL3 (208 aa).

Residue Gln-149 is modified to N5-methylglutamine.

The protein belongs to the universal ribosomal protein uL3 family. Part of the 50S ribosomal subunit. Forms a cluster with proteins L14 and L19. Methylated by PrmB.

Functionally, one of the primary rRNA binding proteins, it binds directly near the 3'-end of the 23S rRNA, where it nucleates assembly of the 50S subunit. The polypeptide is Large ribosomal subunit protein uL3 (Actinobacillus pleuropneumoniae serotype 5b (strain L20)).